A 150-amino-acid polypeptide reads, in one-letter code: UPF0756 membrane protein HAPS_1649 (150 aa).

Helical transmembrane passes span 1–21 (MSLQ…LGIF), 27–46 (VTIS…SKYV), 52–72 (YGIK…LVSG), 82–102 (LINW…WLGG), and 123–143 (IIGV…AGIL).

Belongs to the UPF0756 family.

The protein localises to the cell membrane. The sequence is that of UPF0756 membrane protein HAPS_1649 from Glaesserella parasuis serovar 5 (strain SH0165) (Haemophilus parasuis).